Consider the following 204-residue polypeptide: MFVKICGITSIDTAQAVVDANADMIGFVFAPSKRQLSTSLAEEIANTLPQTIQKVGVFVDEPLENILSIIERVNLDIVQLHGDESIDYQKRIPIPIIKAFPATTEGLNQANQSSAKYILIDSPPLQSSRGGNGVTFNWNILKDQPFTSKLILAGGLNTENIREAIKTVNPAGVDVSSGVETNGKKDAKKIQQFITNVQRKDVLR.

Belongs to the TrpF family.

It carries out the reaction N-(5-phospho-beta-D-ribosyl)anthranilate = 1-(2-carboxyphenylamino)-1-deoxy-D-ribulose 5-phosphate. It functions in the pathway amino-acid biosynthesis; L-tryptophan biosynthesis; L-tryptophan from chorismate: step 3/5. The protein is N-(5'-phosphoribosyl)anthranilate isomerase of Oceanobacillus iheyensis (strain DSM 14371 / CIP 107618 / JCM 11309 / KCTC 3954 / HTE831).